The primary structure comprises 315 residues: Olfactory receptor 10A4 (315 aa).

The Extracellular segment spans residues 1 to 26 (MMWENWTIVSEFVLVSFSALSTELQA). N-linked (GlcNAc...) asparagine glycosylation occurs at Asn5. A helical transmembrane segment spans residues 27-47 (LLFLLFLTIYLVTLMGNVLII). The Cytoplasmic segment spans residues 48 to 55 (LVTIADSA). The helical transmembrane segment at 56 to 76 (LQSPMYFFLRNLSFLEIGFNL) threads the bilayer. The Extracellular portion of the chain corresponds to 77-100 (VIVPKMLGTLIIQDTTISFLGCAT). A disulfide bond links Cys98 and Cys190. A helical membrane pass occupies residues 101 to 121 (QMYFFFFFGAAECCLLATMAY). Residues 122–140 (DRYVAICDPLHYPVIMGHI) lie on the Cytoplasmic side of the membrane. A helical membrane pass occupies residues 141–161 (SCAQLAAASWFSGFSVATVQT). The Extracellular segment spans residues 162-198 (TWIFSFPFCGPNRVNHFFCDSPPVIALVCADTSVFEL). The chain crosses the membrane as a helical span at residues 199–218 (EALTATVLFILFPFLLILGS). Residues 219-238 (YVRILSTIFRMPSAEGKHQA) lie on the Cytoplasmic side of the membrane. Residues 239–259 (FSTCSAHLLVVSLFYSTAILT) form a helical membrane-spanning segment. The Extracellular segment spans residues 260-272 (YFRPQSSASSESK). The chain crosses the membrane as a helical span at residues 273-293 (KLLSLSSTVVTPMLNPIIYSS). Topologically, residues 294–315 (RNKEVKAALKRLIHRTLGSQKL) are cytoplasmic.

It belongs to the G-protein coupled receptor 1 family. In terms of tissue distribution, expressed in the tongue.

Its subcellular location is the cell membrane. In terms of biological role, odorant receptor (Potential). May be involved in taste perception. This is Olfactory receptor 10A4 (OR10A4) from Homo sapiens (Human).